A 639-amino-acid chain; its full sequence is MADDRFTLPLRPLIEKRDRPDPLPLEIAQINAQWGSFRDVSEESLRAKIEEEKSKEYTIEEEEGEGAGAELDTTERLDQLYKRRAEIIQFAMQAHMEAMFALDFVSMLLSKHTPRQAETSMSAYLKQVAPLGSLHSEIINPPPKSEAVVRDTKTVSRGWRLQSFNAAADKLLKSASRLENEVASETRYWHEVLAVKDKGWKLCRLPRQGQTLGVQYGFLEATPIFRDRGLAALRRSEDGTLILDKGLVPTKAKTVRVRVKDCGIITGCSKPYRSAAQDPDSIEGRILQARDTLYEEELFHELFREARIMGSQGVTTRQNLVQFPVSEEQEILLDLVDPDQEVYVDDEATKSEEHNVLADALAHLIRILLCYAHRQNLRRRTQPPPALSPKRRHIPEYQLLRPIMAYLQHSFHVRWLETFMKDVYGVLQSAGLSCSFTATPYSSVNLSNIDRSVPKVEGLIRQFLLPLESTFSADLLTPQSSFKVKSRTNLSVPPFGTQFEILLNLPHYPDVHPPHRIGLHDQAANIITHFIMLDIVAAIELQTSPALSISKTEAKSVSWEATYPHHGELLSVSIDGKQKKMKVILSRDELTIQTYDVLGLERYSRAAPETTPGLQTHTWKAGPTTAPSLMEYVAAVSQR.

Residues 160–187 (RLQSFNAAADKLLKSASRLENEVASETR) adopt a coiled-coil conformation.

Belongs to the Mediator complex subunit 17 family. As to quaternary structure, component of the Mediator complex.

It is found in the nucleus. Functionally, component of the Mediator complex, a coactivator involved in the regulated transcription of nearly all RNA polymerase II-dependent genes. Mediator functions as a bridge to convey information from gene-specific regulatory proteins to the basal RNA polymerase II transcription machinery. Mediator is recruited to promoters by direct interactions with regulatory proteins and serves as a scaffold for the assembly of a functional preinitiation complex with RNA polymerase II and the general transcription factors. In Aspergillus fumigatus (strain ATCC MYA-4609 / CBS 101355 / FGSC A1100 / Af293) (Neosartorya fumigata), this protein is Mediator of RNA polymerase II transcription subunit 17 (srb4).